The primary structure comprises 409 residues: Lipoyl synthase, mitochondrial (409 aa).

The segment at 21–41 (QQQVPPSEEPRNESGAANPPL) is disordered. The [4Fe-4S] cluster site is built by C125, C130, C136, C159, C163, C166, and S375. The Radical SAM core domain occupies 142–364 (EEGDGTATAT…EKEALDMGFL (223 aa)).

This sequence belongs to the radical SAM superfamily. Lipoyl synthase family. The cofactor is [4Fe-4S] cluster.

The protein localises to the mitochondrion. It carries out the reaction [[Fe-S] cluster scaffold protein carrying a second [4Fe-4S](2+) cluster] + N(6)-octanoyl-L-lysyl-[protein] + 2 oxidized [2Fe-2S]-[ferredoxin] + 2 S-adenosyl-L-methionine + 4 H(+) = [[Fe-S] cluster scaffold protein] + N(6)-[(R)-dihydrolipoyl]-L-lysyl-[protein] + 4 Fe(3+) + 2 hydrogen sulfide + 2 5'-deoxyadenosine + 2 L-methionine + 2 reduced [2Fe-2S]-[ferredoxin]. Its pathway is protein modification; protein lipoylation via endogenous pathway; protein N(6)-(lipoyl)lysine from octanoyl-[acyl-carrier-protein]: step 2/2. Functionally, catalyzes the radical-mediated insertion of two sulfur atoms into the C-6 and C-8 positions of the octanoyl moiety bound to the lipoyl domains of lipoate-dependent enzymes, thereby converting the octanoylated domains into lipoylated derivatives. The polypeptide is Lipoyl synthase, mitochondrial (Trypanosoma brucei gambiense (strain MHOM/CI/86/DAL972)).